Here is an 859-residue protein sequence, read N- to C-terminus: Probable helicase A859L (859 aa).

Residues 178-349 form the Helicase ATP-binding domain; it reads YQELRRSGRA…KNRELFGGVA (172 aa). 191–198 is a binding site for ATP; the sequence is MACRCGKT. The short motif at 298 to 301 is the DEAH box element; sequence DECH. Residues 401-553 enclose the Helicase C-terminal domain; that stretch reads HLKTNITAPK…RFYEHLLNPS (153 aa).

This sequence belongs to the asfivirus helicase A859L family.

The protein is Probable helicase A859L of African swine fever virus (isolate Tick/South Africa/Pretoriuskop Pr4/1996) (ASFV).